Consider the following 215-residue polypeptide: MLMEEIMDNPLYLYDLEYKNVIGVDEAGRGPLAGPVVAAAVILKEYTEELDEINDSKKLTEKKREKLYDIIMKNFDVAVGISTVEEIDKLNILNADFLAMRRALKDLKSLKNEKEYTVLVDGNLKIKEYIGKQLPIVKGDAKSLSIAAASIIAKVTRDRLMKDLANIYPDYSFEKHKGYGTKTHIEAIKDKGAIEGVHRKVFLRKILETEEEKTK.

The RNase H type-2 domain occupies Lys-19–Thr-214. The a divalent metal cation site is built by Asp-25, Glu-26, and Asp-121.

The protein belongs to the RNase HII family. Mn(2+) is required as a cofactor. Requires Mg(2+) as cofactor.

The protein localises to the cytoplasm. The catalysed reaction is Endonucleolytic cleavage to 5'-phosphomonoester.. Its function is as follows. Endonuclease that specifically degrades the RNA of RNA-DNA hybrids. The polypeptide is Ribonuclease HII (Fusobacterium nucleatum subsp. nucleatum (strain ATCC 25586 / DSM 15643 / BCRC 10681 / CIP 101130 / JCM 8532 / KCTC 2640 / LMG 13131 / VPI 4355)).